A 338-amino-acid chain; its full sequence is Serine/threonine-protein kinase YabT (338 aa).

Residues 28–286 enclose the Protein kinase domain; sequence YTLRKQLGKG…PIKASPQPAT (259 aa). Residues 34–42 and Lys-55 contribute to the ATP site; that span reads LGKGANGIV. Asp-148 acts as the Proton acceptor in catalysis. The tract at residues 266 to 312 is disordered; it reads DAGQKAAQRKQPIKASPQPATRQRQQKPRQGKITKTRYTPKQKPAKS. The segment covering 289–309 has biased composition (basic residues); sequence RQQKPRQGKITKTRYTPKQKP.

It belongs to the protein kinase superfamily. Ser/Thr protein kinase family. Post-translationally, autophosphorylated.

The catalysed reaction is L-seryl-[protein] + ATP = O-phospho-L-seryl-[protein] + ADP + H(+). The enzyme catalyses L-threonyl-[protein] + ATP = O-phospho-L-threonyl-[protein] + ADP + H(+). Functionally, plays a role in the cell's commitment to sporulation; phosphorylates DNA replication initiation-control protein YabA. Deletion of this kinase delays entry into sporulation but does not affect final spore yield. Overexpression decreases biofilm formation; phosphorylation of YabA probably prevents biofilm formation. The sequence is that of Serine/threonine-protein kinase YabT (yabT) from Bacillus subtilis (strain 168).